The chain runs to 227 residues: ATP-dependent Clp protease proteolytic subunit (227 aa).

Serine 120 acts as the Nucleophile in catalysis. Histidine 145 is an active-site residue.

The protein belongs to the peptidase S14 family. In terms of assembly, fourteen ClpP subunits assemble into 2 heptameric rings which stack back to back to give a disk-like structure with a central cavity, resembling the structure of eukaryotic proteasomes.

It is found in the cytoplasm. The enzyme catalyses Hydrolysis of proteins to small peptides in the presence of ATP and magnesium. alpha-casein is the usual test substrate. In the absence of ATP, only oligopeptides shorter than five residues are hydrolyzed (such as succinyl-Leu-Tyr-|-NHMec, and Leu-Tyr-Leu-|-Tyr-Trp, in which cleavage of the -Tyr-|-Leu- and -Tyr-|-Trp bonds also occurs).. Its function is as follows. Cleaves peptides in various proteins in a process that requires ATP hydrolysis. Has a chymotrypsin-like activity. Plays a major role in the degradation of misfolded proteins. This chain is ATP-dependent Clp protease proteolytic subunit, found in Rickettsia bellii (strain RML369-C).